A 120-amino-acid chain; its full sequence is Large ribosomal subunit protein bL20 (120 aa).

The protein belongs to the bacterial ribosomal protein bL20 family.

Functionally, binds directly to 23S ribosomal RNA and is necessary for the in vitro assembly process of the 50S ribosomal subunit. It is not involved in the protein synthesizing functions of that subunit. This Xanthobacter autotrophicus (strain ATCC BAA-1158 / Py2) protein is Large ribosomal subunit protein bL20.